The chain runs to 524 residues: Hydroxysteroid dehydrogenase-like protein 2 (524 aa).

NADP(+) contacts are provided by residues G17 to G23, K42, and D74. Residue K42 is modified to N6-(2-hydroxyisobutyryl)lysine. The residue at position 116 (K116) is an N6-acetyllysine. Residue Y168 is the Proton acceptor of the active site. K172 serves as a coordination point for NADP(+). Over residues E283 to Q300 the composition is skewed to basic and acidic residues. Residues E283–K410 are disordered. Over residues L301 to Q391 the composition is skewed to low complexity. Residues G414–N521 enclose the SCP2 domain. K424 carries the N6-succinyllysine modification.

The protein belongs to the short-chain dehydrogenases/reductases (SDR) family.

It localises to the peroxisome. It is found in the mitochondrion. Its function is as follows. Has apparently no steroid dehydrogenase activity. Controls bile acid (BA) and lipid metabolism in response to nutritional cues. The chain is Hydroxysteroid dehydrogenase-like protein 2 (Hsdl2) from Rattus norvegicus (Rat).